The chain runs to 207 residues: LexA repressor (207 aa).

The H-T-H motif DNA-binding region spans 28-48 (RAEIARRLGFKSPNAAEEHLK). Residues Ser-126 and Lys-163 each act as for autocatalytic cleavage activity in the active site.

Belongs to the peptidase S24 family. In terms of assembly, homodimer.

It catalyses the reaction Hydrolysis of Ala-|-Gly bond in repressor LexA.. Its function is as follows. Represses a number of genes involved in the response to DNA damage (SOS response), including recA and lexA. In the presence of single-stranded DNA, RecA interacts with LexA causing an autocatalytic cleavage which disrupts the DNA-binding part of LexA, leading to derepression of the SOS regulon and eventually DNA repair. The sequence is that of LexA repressor from Marinomonas sp. (strain MWYL1).